The primary structure comprises 91 residues: Large ribosomal subunit protein uL23c (91 aa).

Belongs to the universal ribosomal protein uL23 family. Part of the 50S ribosomal subunit.

Its subcellular location is the plastid. It is found in the chloroplast. Functionally, binds to 23S rRNA. In Huperzia lucidula (Shining clubmoss), this protein is Large ribosomal subunit protein uL23c (rpl23).